A 357-amino-acid polypeptide reads, in one-letter code: Guanine nucleotide-binding protein G(o) subunit alpha (357 aa).

Gly2 carries the N-myristoyl glycine lipid modification. The S-palmitoyl cysteine moiety is linked to residue Cys3. Residues 32 to 357 (KDIKLLLLGA…ANNLRGCGLY (326 aa)) enclose the G-alpha domain. The tract at residues 35–48 (KLLLLGAGESGKST) is G1 motif. GTP contacts are provided by residues 40–47 (GAGESGKS), 179–185 (LRTRVKT), 204–208 (DVGGQ), 273–276 (NKKD), and Ala329. The Mg(2+) site is built by Ser47 and Thr185. Positions 177 to 185 (DILRTRVKT) are G2 motif. Residues 200 to 209 (FKLFDVGGQR) are G3 motif. Positions 269–276 (ILFLNKKD) are G4 motif. A G5 motif region spans residues 327 to 332 (TCATDT).

Belongs to the G-alpha family. G(i/o/t/z) subfamily. In terms of assembly, g proteins are composed of 3 units; alpha, beta and gamma. The alpha chain contains the guanine nucleotide binding site.

Its function is as follows. Guanine nucleotide-binding proteins (G proteins) are involved as modulators or transducers in various transmembrane signaling systems. The G(o) protein function is not clear. In Mizuhopecten yessoensis (Japanese scallop), this protein is Guanine nucleotide-binding protein G(o) subunit alpha (SCGOA).